We begin with the raw amino-acid sequence, 688 residues long: MTTQNFLAEIGTEELPPKALKKLATAFAENVENELNQAGLSFEKVEWFAAPRRLAVKALGLATAQPSKKIEKRGPAVSAAFDADGKPTKAAEGWARGCGISVEQAERLATDKGEWLVHRAVIEGQPTKNLLVDIISRSLANLPIPKMMRWGDKTEQFVRPVHTVTLFFGGELIEGEILGVKIANVVRGHRFLGEREFTISHADEYLTALREKGSVIADFNERKALILAKSQEKATALGGVADIEEDLLDEVTSLVEFPNVLTAKFEERFLAVPAEALVYTMKGDQKYFPIYDKDGKLLPHFIFVSNINPEDPTAIIEGNEKVVRPRLTDAEFFFKTDLKQRLEDRLPRLETVLFQQQLGTLRDKTARIEALAGEIAAQIGADKAKAERAGLLSKCDLMTNMVFEFTDTQGVMGMHYARHDGEDEEVAVALNEQYMPRFAGDELPKSLVACSVALADKFDTLTGIFGIGQAPKGSADPFALRRAALGSLRIIVEKNLPLDLEDLVRKSAALFGDKLTNANVVDDVVDFMLGRFRAWYQDEGIAVDVIQAVLARRPTRPADFDARVRAVSHFRTLDSAEALAAANKRVSNILAKADVAIGEVNPTACVEPAEKALAEAVLGLRTEVQPLIAKGEYTAVLDKLASLRQPVDSFFDNVMVNAEDPALRQNRLAILNTLQGLFLQVADISLLQ.

The protein belongs to the class-II aminoacyl-tRNA synthetase family. In terms of assembly, tetramer of two alpha and two beta subunits.

Its subcellular location is the cytoplasm. The enzyme catalyses tRNA(Gly) + glycine + ATP = glycyl-tRNA(Gly) + AMP + diphosphate. The protein is Glycine--tRNA ligase beta subunit of Actinobacillus pleuropneumoniae serotype 7 (strain AP76).